The chain runs to 305 residues: Acetylglutamate kinase (305 aa).

Substrate-binding positions include 75 to 76 (GG), arginine 97, and asparagine 202.

This sequence belongs to the acetylglutamate kinase family. ArgB subfamily.

The protein resides in the cytoplasm. It carries out the reaction N-acetyl-L-glutamate + ATP = N-acetyl-L-glutamyl 5-phosphate + ADP. It functions in the pathway amino-acid biosynthesis; L-arginine biosynthesis; N(2)-acetyl-L-ornithine from L-glutamate: step 2/4. Catalyzes the ATP-dependent phosphorylation of N-acetyl-L-glutamate. This chain is Acetylglutamate kinase, found in Rhodospirillum centenum (strain ATCC 51521 / SW).